An 81-amino-acid chain; its full sequence is Conotoxin Im6.1 (81 aa).

Positions 1–20 are cleaved as a signal peptide; sequence MSKLGVVLFTLLLLVPLVTP. The propeptide occupies 21-47; sequence ERDGGKWTMLAKNKKAMKRNLMDFITR. Intrachain disulfides connect C49–C61, C54–C67, and C60–C76.

The protein belongs to the conotoxin M superfamily. In terms of tissue distribution, expressed by the venom duct.

It is found in the secreted. This chain is Conotoxin Im6.1, found in Conus imperialis (Imperial cone).